Reading from the N-terminus, the 478-residue chain is Proline--tRNA ligase (478 aa).

Belongs to the class-II aminoacyl-tRNA synthetase family. ProS type 3 subfamily. As to quaternary structure, homodimer.

Its subcellular location is the cytoplasm. It catalyses the reaction tRNA(Pro) + L-proline + ATP = L-prolyl-tRNA(Pro) + AMP + diphosphate. Functionally, catalyzes the attachment of proline to tRNA(Pro) in a two-step reaction: proline is first activated by ATP to form Pro-AMP and then transferred to the acceptor end of tRNA(Pro). This Ignicoccus hospitalis (strain KIN4/I / DSM 18386 / JCM 14125) protein is Proline--tRNA ligase.